Consider the following 375-residue polypeptide: RNA exonuclease 4 (375 aa).

The segment at 21-78 is disordered; it reads KTLGSDASSSSASSSTNNRRKLSTSESTKPKRTRLDAKEKDAEGSKSCSPAPTSLPWF. The segment covering 25–35 has biased composition (low complexity); that stretch reads SDASSSSASSS. Over residues 53–64 the composition is skewed to basic and acidic residues; it reads TRLDAKEKDAEG. In terms of domain architecture, Exonuclease spans 134–297; that stretch reads NYLAIDCEMV…FRSQKPKWDE (164 aa).

Belongs to the REXO4 family.

It is found in the nucleus. Exoribonuclease involved in ribosome biosynthesis. Involved in the processing of ITS1, the internal transcribed spacer localized between the 18S and 5.8S rRNAs. The chain is RNA exonuclease 4 (REX4) from Mycosarcoma maydis (Corn smut fungus).